Consider the following 586-residue polypeptide: Aspartate--tRNA(Asp/Asn) ligase (586 aa).

Glu-172 contacts L-aspartate. Residues Gln-196–Lys-199 are aspartate. An L-aspartate-binding site is contributed by Arg-218. ATP-binding positions include Arg-218–Glu-220 and Gln-227. His-446 contributes to the L-aspartate binding site. Glu-480 is a binding site for ATP. Arg-487 serves as a coordination point for L-aspartate. ATP is bound at residue Gly-532–Arg-535.

It belongs to the class-II aminoacyl-tRNA synthetase family. Type 1 subfamily. As to quaternary structure, homodimer.

Its subcellular location is the cytoplasm. The catalysed reaction is tRNA(Asx) + L-aspartate + ATP = L-aspartyl-tRNA(Asx) + AMP + diphosphate. In terms of biological role, aspartyl-tRNA synthetase with relaxed tRNA specificity since it is able to aspartylate not only its cognate tRNA(Asp) but also tRNA(Asn). Reaction proceeds in two steps: L-aspartate is first activated by ATP to form Asp-AMP and then transferred to the acceptor end of tRNA(Asp/Asn). The polypeptide is Aspartate--tRNA(Asp/Asn) ligase (Borrelia garinii subsp. bavariensis (strain ATCC BAA-2496 / DSM 23469 / PBi) (Borreliella bavariensis)).